A 685-amino-acid chain; its full sequence is Sodium-dependent phosphate transporter 1-B (685 aa).

The next 6 membrane-spanning stretches (helical) occupy residues 21–41 (IMAP…VLAF), 66–86 (ACIL…AKVS), 106–126 (LMAG…AASF), 162–182 (IVLS…LLFF), 207–227 (ACTI…LLGF), and 234–254 (GIIL…WFFV). The interval 489–511 (EGCIEDVVTDRKSSSSSLEERHD) is disordered. The span at 496–511 (VTDRKSSSSSLEERHD) shows a compositional bias: basic and acidic residues. 4 consecutive transmembrane segments (helical) span residues 517-537 (VSLL…FAHG), 565-585 (ATPI…LWVW), 606-626 (FSIE…GLPI), and 656-676 (IFLA…GIMA).

Belongs to the inorganic phosphate transporter (PiT) (TC 2.A.20) family.

Its subcellular location is the membrane. Sodium-phosphate symporter which plays a fundamental housekeeping role in phosphate transport. This Xenopus laevis (African clawed frog) protein is Sodium-dependent phosphate transporter 1-B (slc20a1-b).